Reading from the N-terminus, the 316-residue chain is Probable thioesterase lcsE (316 aa).

The protein belongs to the AMT4 thioesterase family.

Its pathway is secondary metabolite biosynthesis. Its function is as follows. Probable thioesterase; part of the gene cluster that mediates the biosynthesis of the lipopeptide antibiotics leucinostatins that show extensive biological activities, including antimalarial, antiviral, antibacterial, antifungal, and antitumor activities, as well as phytotoxic. Leucinostatin A contains nine amino acid residues, including the unusual amino acid 4-methyl-L-proline (MePro), 2-amino-6-hydroxy-4-methyl-8-oxodecanoic acid (AHyMeOA), 3-hydroxyleucine (HyLeu), alpha-aminoisobutyric acid (AIB), beta-Ala, a 4-methylhex-2-enoic acid at the N-terminus as well as a N1,N1-dimethylpropane-1,2-diamine (DPD) at the C-terminus. The biosynthesis of leucinostatins is probably initiated with the assembly of 4-methylhex-2-enoic acid by a reducing PKS. Two reducing polyketide synthases, lcsB and lcsC, have been identified in the cluster and it is not clear which is the one that assembles 4-methylhex-2-enoic acid since both contain KS, AT, DH, cMT, ER, KR and ACP domains. The polyketide residue might be transferred to the NRPS lcsA, mediated by two additional enzymes, the acyl-CoA ligase lcsD and the thioesterase lcsE. The linear polyketide carboxylic acid, which is released from PKS, is converted to a CoA thioester by lcsD, and then lcsE hydrolyzes the thiol bond and shuttles the polyketide intermediate to lcsA. The C domain of the first module catalyzed the condensation of 4-methylhex-2-enoic acid and MePro carried by domain A1, followed by successive condensations of nine amino acids to trigger the elongation of the linear peptide. A5 and A6 domains of lcsA are proposed to incorporate leucine, A2 AHyMeOA, and A3 incorporates HyLeu. A4, A7 and A8 incorporate AIB. The AHyMeOA in leucinostatin A activated by the A2 might be produced by the second PKS (lcsB or lcsC) present within the cluster. The MePro is probably produced via leucine cyclization and may originate from a separate pathway, independent of the cluster. Another nonproteinogenic amino acid, beta-Ala, could be produced by an aspartic acid decarboxylase also localized outside of the cluster. Two candidates are VFPBJ_01400 and VFPBJ_10476. The final peptide scaffold may be released by the NAD(P)H-dependent thioester reductase (TE) at the C-terminal region of lcsA. Transamination of the lcsA product by the transaminase lcsP may produce DPD at the C-terminus. Further hydroxylation steps performed alternatively by the cytochrome P450 monooxygenases lcsI, lcsK and lcsN then yield the non-methylated leucinostatins precursor. It is also possible that leucines can be hydroxylated prior to their incorporation into the peptide. Varying extents of methylation then lead to the formation of leucinostatins A and B. The sequence is that of Probable thioesterase lcsE from Purpureocillium lilacinum (Paecilomyces lilacinus).